The sequence spans 581 residues: Suppressor of cytokine signaling 7 (581 aa).

Disordered stretches follow at residues 1–23 (MVFR…EPGP), 89–109 (PPPP…DPTE), 123–272 (EAES…RTQS), and 297–316 (QRGL…RRSL). Pro residues-rich tracts occupy residues 89-99 (PPPPQPQPPAA), 154-164 (PPGPELPPVPF), and 187-198 (QPPPPPPPPGPL). Positions 124–494 (AESLETNSCS…GKFLYFLRSR (371 aa)) are mediates interaction with SORBS3. Residues 208–219 (GSFKIRLSRLFR) show a composition bias toward basic residues. Positions 303–313 (PHPPTPPPPPR) are enriched in pro residues. The 110-residue stretch at 400–509 (WYWGPMNWED…PTPVQLLYPV (110 aa)) folds into the SH2 domain. The SOCS box domain maps to 504–554 (QLLYPVSRFSNVKSLQHLCRFRIRQLVRIDHIPDLPLPKPLISYIRKFYYY).

As to quaternary structure, substrate-recognition component of the ECS(SOCS7) complex, composed of SOCS7, CUL5, ELOB, ELOC and RNF7/RBX2. Interacts, via the third proline-rich region, with the second SH3 domain of the adapter protein NCK1. Also interacts with GRB2, INSR, PLCG1, SORBS3/vinexin, and phosphorylated STAT3 and STAT5. Interacts with SEPT6. Interacts with phosphorylated IRS4 and PIK3R1. As to expression, expressed in brain and leukocytes. Also in fetal lung fibroblasts and fetal brain.

The protein localises to the cytoplasm. Its subcellular location is the nucleus. It is found in the cell membrane. It functions in the pathway protein modification; protein ubiquitination. Substrate-recognition component of a cullin-5-RING E3 ubiquitin-protein ligase complex (ECS complex, also named CRL5 complex), which mediates the ubiquitination and subsequent proteasomal degradation of target proteins, such as DAB1 and IRS1. Specifically recognizes and binds phosphorylated proteins via its SH2 domain, promoting their ubiquitination. The ECS(SOCS7) complex acts as a key regulator of reelin signaling by mediating ubiquitination and degradation of phosphorylated DAB1 in the cortical plate of the developing cerebral cortex, thereby regulating neuron positioning during cortex development. Functions in insulin signaling and glucose homeostasis through IRS1 ubiquitination and subsequent proteasomal degradation. Also inhibits prolactin, growth hormone and leptin signaling by preventing STAT3 and STAT5 activation, sequestering them in the cytoplasm and reducing their binding to DNA. The protein is Suppressor of cytokine signaling 7 of Homo sapiens (Human).